A 209-amino-acid chain; its full sequence is Cytidylate kinase (209 aa).

9 to 17 (GPAAAGKGT) is a binding site for ATP.

Belongs to the cytidylate kinase family. Type 1 subfamily.

It localises to the cytoplasm. It catalyses the reaction CMP + ATP = CDP + ADP. It carries out the reaction dCMP + ATP = dCDP + ADP. This is Cytidylate kinase from Granulibacter bethesdensis (strain ATCC BAA-1260 / CGDNIH1).